Here is a 295-residue protein sequence, read N- to C-terminus: 33 kDa chaperonin (295 aa).

2 disulfide bridges follow: cysteine 237–cysteine 239 and cysteine 270–cysteine 273.

This sequence belongs to the HSP33 family. Under oxidizing conditions two disulfide bonds are formed involving the reactive cysteines. Under reducing conditions zinc is bound to the reactive cysteines and the protein is inactive.

It is found in the cytoplasm. Redox regulated molecular chaperone. Protects both thermally unfolding and oxidatively damaged proteins from irreversible aggregation. Plays an important role in the bacterial defense system toward oxidative stress. This chain is 33 kDa chaperonin, found in Lactiplantibacillus plantarum (strain ATCC BAA-793 / NCIMB 8826 / WCFS1) (Lactobacillus plantarum).